The following is a 569-amino-acid chain: Urease subunit beta (569 aa).

Positions 131 to 569 (GGIDTHIHFI…VSLAQLFSIF (439 aa)) constitute a Urease domain. Residues His136, His138, and Lys219 each contribute to the Ni(2+) site. The residue at position 219 (Lys219) is an N6-carboxylysine. His221 serves as a coordination point for substrate. Ni(2+) contacts are provided by His248 and His274. His322 acts as the Proton donor in catalysis. Asp362 contacts Ni(2+).

The protein belongs to the metallo-dependent hydrolases superfamily. Urease alpha subunit family. Heterohexamer of 3 UreA (alpha) and 3 UreB (beta) subunits. Ni cation serves as cofactor. In terms of processing, carboxylation allows a single lysine to coordinate two nickel ions.

The protein resides in the cytoplasm. The enzyme catalyses urea + 2 H2O + H(+) = hydrogencarbonate + 2 NH4(+). It functions in the pathway nitrogen metabolism; urea degradation; CO(2) and NH(3) from urea (urease route): step 1/1. This Helicobacter pylori (strain Shi470) protein is Urease subunit beta.